Here is a 141-residue protein sequence, read N- to C-terminus: MAKKVTGMIKLQLPAGKATPAPPVGPALGQHGVNIMGFCKEFNAKTADKAGLIIPVVITVYQDRSFSFILKTPPAAVLIKKELGLESGSGVPNRTKVGNITKEQIRKIAELKMPDLNAATIETAMSMIEGTARSMGVVVVE.

This sequence belongs to the universal ribosomal protein uL11 family. Part of the ribosomal stalk of the 50S ribosomal subunit. Interacts with L10 and the large rRNA to form the base of the stalk. L10 forms an elongated spine to which L12 dimers bind in a sequential fashion forming a multimeric L10(L12)X complex. Post-translationally, one or more lysine residues are methylated.

Functionally, forms part of the ribosomal stalk which helps the ribosome interact with GTP-bound translation factors. This chain is Large ribosomal subunit protein uL11, found in Clostridium perfringens (strain ATCC 13124 / DSM 756 / JCM 1290 / NCIMB 6125 / NCTC 8237 / Type A).